The following is a 495-amino-acid chain: DDB1- and CUL4-associated factor 4 (495 aa).

The span at 1–17 (MNKSRWQSRRRHGRRSH) shows a compositional bias: basic residues. Positions 1 to 66 (MNKSRWQSRR…TAGTSSVPEL (66 aa)) are disordered. The segment covering 24–34 (RLRDSEDRSDS) has biased composition (basic and acidic residues). Low complexity predominate over residues 51–62 (PSTSSGTAGTSS). 2 WD repeats span residues 368–407 (FHDS…CVRQ) and 410–451 (GHVN…LLRT).

As to quaternary structure, interacts with DDB1 and CUL4A.

It functions in the pathway protein modification; protein ubiquitination. Functionally, may function as a substrate receptor for CUL4-DDB1 E3 ubiquitin-protein ligase complex. The protein is DDB1- and CUL4-associated factor 4 (DCAF4) of Homo sapiens (Human).